Reading from the N-terminus, the 172-residue chain is MVDKRESYTKTDLEASGRGELFGAGGPPLPSGNMLMMDRVIKMTEDGGSHNKGYVEAELDINPDLWFFACHFVGDPVMPGCLGLDAMWQLVGFYLGWLGGEGKGRALGVGEVKFTGQVLPTAKKVTYRIHFKRVINRKLIMGLADGEVLVDGKLIYTANDLKVGLFKDTSAF.

Histidine 71 is a catalytic residue.

This sequence belongs to the thioester dehydratase family. FabA subfamily. Homodimer.

The protein localises to the cytoplasm. The catalysed reaction is a (3R)-hydroxyacyl-[ACP] = a (2E)-enoyl-[ACP] + H2O. The enzyme catalyses (3R)-hydroxydecanoyl-[ACP] = (2E)-decenoyl-[ACP] + H2O. It carries out the reaction (2E)-decenoyl-[ACP] = (3Z)-decenoyl-[ACP]. It functions in the pathway lipid metabolism; fatty acid biosynthesis. Its function is as follows. Necessary for the introduction of cis unsaturation into fatty acids. Catalyzes the dehydration of (3R)-3-hydroxydecanoyl-ACP to E-(2)-decenoyl-ACP and then its isomerization to Z-(3)-decenoyl-ACP. Can catalyze the dehydratase reaction for beta-hydroxyacyl-ACPs with saturated chain lengths up to 16:0, being most active on intermediate chain length. In Edwardsiella ictaluri (strain 93-146), this protein is 3-hydroxydecanoyl-[acyl-carrier-protein] dehydratase.